The primary structure comprises 133 residues: Large ribosomal subunit protein bL17 (133 aa).

It belongs to the bacterial ribosomal protein bL17 family. In terms of assembly, part of the 50S ribosomal subunit. Contacts protein L32.

In Polaromonas naphthalenivorans (strain CJ2), this protein is Large ribosomal subunit protein bL17.